A 768-amino-acid chain; its full sequence is DNA ligase (768 aa).

NAD(+) contacts are provided by residues 30–34 (DAEYD), 79–80 (SL), and glutamate 190. Catalysis depends on lysine 192, which acts as the N6-AMP-lysine intermediate. Residues arginine 213, glutamate 250, lysine 367, and lysine 391 each coordinate NAD(+). Zn(2+) contacts are provided by cysteine 485, cysteine 488, cysteine 503, and cysteine 509. Positions 678-767 (AAEQPLSGLS…IPPEIQARMQ (90 aa)) constitute a BRCT domain.

The protein belongs to the NAD-dependent DNA ligase family. LigA subfamily. Mg(2+) is required as a cofactor. Requires Mn(2+) as cofactor.

The enzyme catalyses NAD(+) + (deoxyribonucleotide)n-3'-hydroxyl + 5'-phospho-(deoxyribonucleotide)m = (deoxyribonucleotide)n+m + AMP + beta-nicotinamide D-nucleotide.. In terms of biological role, DNA ligase that catalyzes the formation of phosphodiester linkages between 5'-phosphoryl and 3'-hydroxyl groups in double-stranded DNA using NAD as a coenzyme and as the energy source for the reaction. It is essential for DNA replication and repair of damaged DNA. This chain is DNA ligase, found in Magnetococcus marinus (strain ATCC BAA-1437 / JCM 17883 / MC-1).